The chain runs to 278 residues: E3 ubiquitin-protein ligase MARCHF5 (278 aa).

Residues 6 to 75 (LQQMLDRSCW…PQCNAEYLIV (70 aa)) form an RING-CH-type zinc finger. Positions 14, 17, 33, 35, 43, 46, 65, and 68 each coordinate Zn(2+). Transmembrane regions (helical) follow at residues 99–119 (FAAA…YGAV), 139–159 (PLFL…GKMI), 209–229 (ILCG…LMFS), and 238–258 (TILG…YFKQ).

Monomer and homodimer. Interacts with MFN1, MFN2, DNM1L and FIS1. Autoubiquitinated leading to degradation (short half-life).

It is found in the mitochondrion outer membrane. The enzyme catalyses S-ubiquitinyl-[E2 ubiquitin-conjugating enzyme]-L-cysteine + [acceptor protein]-L-lysine = [E2 ubiquitin-conjugating enzyme]-L-cysteine + N(6)-ubiquitinyl-[acceptor protein]-L-lysine.. Its pathway is protein modification; protein ubiquitination. Mitochondrial E3 ubiquitin-protein ligase that plays a crucial role in the control of mitochondrial morphology by acting as a positive regulator of mitochondrial fission and as an important regulator of immune response. Plays a crucial role in maintaining mitochondrial homeostasis by regulating the dynamics of mitochondria through the ubiquitination of key proteins involved in fission and fusion such as FIS1, DNM1L and MFN1. Acts as a critical determinant of mitotic apoptosis through both MCL1-dependent and -independent pathways. Turns off persistent immune signaling by degrading oligomeric complexes of retinoic acid-inducible gene I/DDX58 and mitochondrial antiviral-signaling protein/MAVS formed upon RNA virus infection. Promotes STING-mediated type-I interferon production via 'Lys-63'-linked ubiquitination of STING1 thereby preserving its activity and preventing the formation of inactive STING1 polymers. Plays also an essential role in the formation of PEX3-containing vesicles in the de novo biogenesis of peroxisomes from mitochondria. Acts as a regulator of NLRP3 inflammasome activation on the mitochondria by mediating the 'Lys-27'-linked polyubiquitination of NLRP3, positively regulating the NLRP3-NEK7 complex formation and NLRP3 oligomerization. This Bos taurus (Bovine) protein is E3 ubiquitin-protein ligase MARCHF5 (MARCHF5).